We begin with the raw amino-acid sequence, 699 residues long: Elongation factor G (699 aa).

Residues 8 to 283 (EHIRNIGICA…AVVDFLPSPI (276 aa)) form the tr-type G domain. GTP is bound by residues 17-24 (AHIDAGKT), 81-85 (DTPGH), and 135-138 (NKMD).

The protein belongs to the TRAFAC class translation factor GTPase superfamily. Classic translation factor GTPase family. EF-G/EF-2 subfamily.

The protein localises to the cytoplasm. Catalyzes the GTP-dependent ribosomal translocation step during translation elongation. During this step, the ribosome changes from the pre-translocational (PRE) to the post-translocational (POST) state as the newly formed A-site-bound peptidyl-tRNA and P-site-bound deacylated tRNA move to the P and E sites, respectively. Catalyzes the coordinated movement of the two tRNA molecules, the mRNA and conformational changes in the ribosome. The chain is Elongation factor G from Rickettsia parkeri.